We begin with the raw amino-acid sequence, 462 residues long: Probable serine/threonine-protein kinase DDB_G0286841 (462 aa).

Positions Phe-64 to Phe-358 constitute a Protein kinase domain. Residues Ile-70–Val-78 and Lys-93 each bind ATP. The active-site Proton acceptor is Asp-188. Residues Ser-359–Tyr-462 enclose the AGC-kinase C-terminal domain. Residues Asn-414 to Asn-439 are compositionally biased toward low complexity. Residues Asn-414–Asn-447 are disordered.

It belongs to the protein kinase superfamily. AGC Ser/Thr protein kinase family.

The catalysed reaction is L-seryl-[protein] + ATP = O-phospho-L-seryl-[protein] + ADP + H(+). It carries out the reaction L-threonyl-[protein] + ATP = O-phospho-L-threonyl-[protein] + ADP + H(+). In Dictyostelium discoideum (Social amoeba), this protein is Probable serine/threonine-protein kinase DDB_G0286841.